Here is a 148-residue protein sequence, read N- to C-terminus: Arginine repressor (148 aa).

This sequence belongs to the ArgR family.

It localises to the cytoplasm. Its pathway is amino-acid biosynthesis; L-arginine biosynthesis [regulation]. Its function is as follows. Regulates arginine biosynthesis genes. This chain is Arginine repressor, found in Prosthecochloris aestuarii (strain DSM 271 / SK 413).